A 73-amino-acid polypeptide reads, in one-letter code: Kazal peptide Pr13a (73 aa).

The first 20 residues, 1–20 (MKYIILFLVLIGLQANLALG), serve as a signal peptide directing secretion. Residues 21-73 (SKCKCDCTKYPYSPVCAKELKTGDTETFNNVCQLQCYNCTHMKNYVVIYSGSC) enclose the Kazal-like domain. 3 disulfides stabilise this stretch: cysteine 23-cysteine 59, cysteine 27-cysteine 52, and cysteine 36-cysteine 73.

As to expression, expressed by the venom gland (anterior main gland) (at protein level).

It localises to the secreted. In terms of biological role, may act as a serine protease inhibitor, since it possess the kazal serine protease inhibitor signature. The chain is Kazal peptide Pr13a from Platymeris rhadamanthus (Red spot assassin bug).